The sequence spans 336 residues: Dihydroorotate dehydrogenase (quinone) (336 aa).

FMN-binding positions include 62–66 and T86; that span reads AGLDK. Residue K66 coordinates substrate. Residue 111–115 coordinates substrate; it reads NRMGF. FMN-binding residues include N139 and N172. N172 is a substrate binding site. S175 functions as the Nucleophile in the catalytic mechanism. Substrate is bound at residue N177. FMN is bound by residues K217 and T245. 246–247 is a substrate binding site; it reads NT. Residues G268, G297, and 318 to 319 contribute to the FMN site; that span reads YS.

This sequence belongs to the dihydroorotate dehydrogenase family. Type 2 subfamily. Monomer. Requires FMN as cofactor.

Its subcellular location is the cell membrane. It catalyses the reaction (S)-dihydroorotate + a quinone = orotate + a quinol. Its pathway is pyrimidine metabolism; UMP biosynthesis via de novo pathway; orotate from (S)-dihydroorotate (quinone route): step 1/1. Catalyzes the conversion of dihydroorotate to orotate with quinone as electron acceptor. This Serratia proteamaculans (strain 568) protein is Dihydroorotate dehydrogenase (quinone).